Consider the following 720-residue polypeptide: MSSNKKRRIDEKPMSALSALQARRREAAASPVQTTQTGSESDEKSVTTSVNPYQLLRKDSSQSTAPKTPKKNVVKDQYLPRGAESPASRSRGVVIASGNTDTLNPELAGASQKVVREYSSFRLSKQNHRVKTGGVVELNLSNSERFLVLGSFGIRVIQGEVSLAGATLYPSETIEWVHAPHCHAVPMLRTIDETILELHPDRNARGIRQLGRLSPLFRKIWNESPETNSSKTSKESTFEIIYTSEDAPKKCIIQKLVSPPEWNKKLSSLVATSRKKPSLSTLICGPKSAGKSTFSRLFLNGLLTDRSQKQGARSVVILDLDPGQPEYAPPGTLSLVFVTKPNLGTPFTHPSLKNSAFTVVRSHSMASATPAPNPDLYLACATDLFDTYSKHYSGAPLIVNTPGWIQGTGLDLLSSLIEKIKPQEVLYMSEAGPDEAVNALRAATKLMFTELPSQPSEFTSRTAAHLRAMQTMSYFHLQNTALKTSNLLDTSTRLKWDASPLSSRAPLLVQYSSSKRGVLGLLSYDYQCSPELLADTVNGLVLAAVEIEDRKAFSNFPQEVAPPPLVSTSPENIPFIPNYDDVALDPRYSRTIGLVLLRGIDTKSETLQLVTPIPLEEFRSIKSQGRSIVLLHGKFDTPNWAYTEELYERAGTEEGNDMVLEVTEEDTEDDQSGVEPEGADGVSDLTEVPWVEVLKGSQRRPVGSQVWRPLRHLGRNNTGD.

The tract at residues M1–R91 is disordered. ATP is bound at residue G285–S292. The span at T663–S672 shows a compositional bias: acidic residues. Disordered stretches follow at residues T663 to T686 and Q698 to D720.

It belongs to the Clp1 family. NOL9/GRC3 subfamily.

The protein localises to the nucleus. It is found in the nucleolus. Its function is as follows. Polynucleotide 5'-kinase involved in rRNA processing. This chain is Polynucleotide 5'-hydroxyl-kinase GRC3 (GRC3), found in Gibberella zeae (strain ATCC MYA-4620 / CBS 123657 / FGSC 9075 / NRRL 31084 / PH-1) (Wheat head blight fungus).